The primary structure comprises 1406 residues: Protein FAM135B (1406 aa).

Disordered stretches follow at residues Trp519–Ala548 and Ser770–Gly820. Phosphoserine occurs at positions 777 and 778. Over residues Lys804 to Cys816 the composition is skewed to polar residues.

It belongs to the FAM135 family.

The protein is Protein FAM135B (FAM135B) of Homo sapiens (Human).